The following is a 99-amino-acid chain: Large ribosomal subunit protein bL27 (99 aa).

A propeptide spanning residues 1–9 is cleaved from the precursor; the sequence is MLIMNLQLF.

The protein belongs to the bacterial ribosomal protein bL27 family. The N-terminus is cleaved by ribosomal processing cysteine protease Prp.

In Clostridium botulinum (strain Eklund 17B / Type B), this protein is Large ribosomal subunit protein bL27.